The primary structure comprises 422 residues: Glutamyl-tRNA reductase (422 aa).

Substrate contacts are provided by residues 48-51 (TCNR), Ser-100, 105-107 (EDQ), and Gln-111. Cys-49 (nucleophile) is an active-site residue. 180-185 (GTGEMG) contacts NADP(+).

It belongs to the glutamyl-tRNA reductase family. In terms of assembly, homodimer.

The enzyme catalyses (S)-4-amino-5-oxopentanoate + tRNA(Glu) + NADP(+) = L-glutamyl-tRNA(Glu) + NADPH + H(+). It functions in the pathway porphyrin-containing compound metabolism; protoporphyrin-IX biosynthesis; 5-aminolevulinate from L-glutamyl-tRNA(Glu): step 1/2. Its function is as follows. Catalyzes the NADPH-dependent reduction of glutamyl-tRNA(Glu) to glutamate 1-semialdehyde (GSA). In Methanococcoides burtonii (strain DSM 6242 / NBRC 107633 / OCM 468 / ACE-M), this protein is Glutamyl-tRNA reductase.